The following is a 571-amino-acid chain: Glutamate--tRNA ligase (571 aa).

The 'HIGH' region signature appears at 110–120 (PNPNGPATLGS).

This sequence belongs to the class-I aminoacyl-tRNA synthetase family. Glutamate--tRNA ligase type 2 subfamily.

Its subcellular location is the cytoplasm. The catalysed reaction is tRNA(Glu) + L-glutamate + ATP = L-glutamyl-tRNA(Glu) + AMP + diphosphate. Its function is as follows. Catalyzes the attachment of glutamate to tRNA(Glu) in a two-step reaction: glutamate is first activated by ATP to form Glu-AMP and then transferred to the acceptor end of tRNA(Glu). The protein is Glutamate--tRNA ligase of Methanosarcina mazei (strain ATCC BAA-159 / DSM 3647 / Goe1 / Go1 / JCM 11833 / OCM 88) (Methanosarcina frisia).